A 287-amino-acid polypeptide reads, in one-letter code: tRNA uridine(34) hydroxylase (287 aa).

The Rhodanese domain occupies 132–226 (EGRPVVMLDT…YFEEVGGAHY (95 aa)). Residue Cys186 is the Cysteine persulfide intermediate of the active site.

It belongs to the TrhO family.

The enzyme catalyses uridine(34) in tRNA + AH2 + O2 = 5-hydroxyuridine(34) in tRNA + A + H2O. Catalyzes oxygen-dependent 5-hydroxyuridine (ho5U) modification at position 34 in tRNAs. In Paraburkholderia xenovorans (strain LB400), this protein is tRNA uridine(34) hydroxylase.